The chain runs to 380 residues: Cytochrome b (380 aa).

The next 4 membrane-spanning stretches (helical) occupy residues 34 to 54 (FGSL…LLAM), 78 to 99 (WLIR…YLHI), 114 to 134 (WNTG…GYVL), and 179 to 199 (FFAL…IHLT). Heme b is bound by residues His84 and His98. Heme b is bound by residues His183 and His197. A ubiquinone is bound at residue His202. The next 4 helical transmembrane spans lie at 227 to 247 (LKDF…ALFT), 289 to 309 (LGGV…PFLH), 321 to 341 (LSQT…WIGS), and 348 to 368 (FITI…ILFP).

Belongs to the cytochrome b family. In terms of assembly, the cytochrome bc1 complex contains 11 subunits: 3 respiratory subunits (MT-CYB, CYC1 and UQCRFS1), 2 core proteins (UQCRC1 and UQCRC2) and 6 low-molecular weight proteins (UQCRH/QCR6, UQCRB/QCR7, UQCRQ/QCR8, UQCR10/QCR9, UQCR11/QCR10 and a cleavage product of UQCRFS1). This cytochrome bc1 complex then forms a dimer. It depends on heme b as a cofactor.

The protein resides in the mitochondrion inner membrane. Its function is as follows. Component of the ubiquinol-cytochrome c reductase complex (complex III or cytochrome b-c1 complex) that is part of the mitochondrial respiratory chain. The b-c1 complex mediates electron transfer from ubiquinol to cytochrome c. Contributes to the generation of a proton gradient across the mitochondrial membrane that is then used for ATP synthesis. In Coracias caudatus (Lilac-breasted roller), this protein is Cytochrome b (MT-CYB).